The primary structure comprises 363 residues: Peroxin-36 (363 aa).

The Cytoplasmic segment spans residues 1–193 (MSNLEKQIRL…ESFFINSFEQ (193 aa)). Disordered stretches follow at residues 71–114 (QNHQ…DTST) and 128–157 (TNSN…SKSG). A compositionally biased stretch (low complexity) spans 97–114 (VDSNSDSSSSETLIDTST). Residues 194-213 (LIALFDNFYFLSSLIGFNTS) traverse the membrane as a helical segment. At 214–232 (NSNSKITRLLRNFIKQASK) the chain is on the peroxisomal side. Residues 233–250 (IWLVIIFLTVKNLFIRMI) traverse the membrane as a helical segment. Residues 251–363 (KLNRTEKKVK…SSDDIIDEYA (113 aa)) lie on the Cytoplasmic side of the membrane.

It localises to the peroxisome membrane. Its function is as follows. Controls peroxisome morphology and abundance under conditions of peroxisome proliferation such as oleate and methanol media. Has additional function(s), which is not present in its functional homologs such as Saccharomyces cerevisea PEX34 or human PEX16. The sequence is that of Peroxin-36 from Komagataella phaffii (strain GS115 / ATCC 20864) (Yeast).